The primary structure comprises 432 residues: Enolase (432 aa).

Residue Q164 participates in (2R)-2-phosphoglycerate binding. E206 (proton donor) is an active-site residue. The Mg(2+) site is built by D243, E284, and D311. (2R)-2-phosphoglycerate-binding residues include K336, R365, S366, and K387. Residue K336 is the Proton acceptor of the active site.

It belongs to the enolase family. Mg(2+) is required as a cofactor.

It is found in the cytoplasm. Its subcellular location is the secreted. The protein localises to the cell surface. The catalysed reaction is (2R)-2-phosphoglycerate = phosphoenolpyruvate + H2O. The protein operates within carbohydrate degradation; glycolysis; pyruvate from D-glyceraldehyde 3-phosphate: step 4/5. Its function is as follows. Catalyzes the reversible conversion of 2-phosphoglycerate (2-PG) into phosphoenolpyruvate (PEP). It is essential for the degradation of carbohydrates via glycolysis. This chain is Enolase, found in Synechococcus sp. (strain JA-3-3Ab) (Cyanobacteria bacterium Yellowstone A-Prime).